A 318-amino-acid polypeptide reads, in one-letter code: MKKTKQPVIVLVGPTAVGKTKLSIHIAKAYNGEIISGDSMQIYKGMDIGTAKITSEEMDGVPHHLIDIKEPDESFSTAEFQQLVRMKIKEIAARGKTPMIVGGTGLYIQSVLYDYTFTDEKSDPAFREEMALFEQQHGPLQLHEKLKAVDPDAAKAIHPNNVRRVIRALEVIHTTGQKMSEMQNGHQEVPLYDTAFIGLKMDRELLYERIHQRIDMMIDEGLIEEVSALYQSGLKDCQSVQAIGYKELYTYFQGDCSLDEAIQQLKQNSRRYAKRQFTWFRNKMDVTWFDMTPPCHFSDKKEEIFAYIAGKLGLKAKL.

13–20 (GPTAVGKT) is an ATP binding site. Position 15 to 20 (15 to 20 (TAVGKT)) interacts with substrate. The tract at residues 38 to 41 (DSMQ) is interaction with substrate tRNA.

The protein belongs to the IPP transferase family. Monomer. Requires Mg(2+) as cofactor.

The catalysed reaction is adenosine(37) in tRNA + dimethylallyl diphosphate = N(6)-dimethylallyladenosine(37) in tRNA + diphosphate. In terms of biological role, catalyzes the transfer of a dimethylallyl group onto the adenine at position 37 in tRNAs that read codons beginning with uridine, leading to the formation of N6-(dimethylallyl)adenosine (i(6)A). This Bacillus pumilus (strain SAFR-032) protein is tRNA dimethylallyltransferase.